We begin with the raw amino-acid sequence, 504 residues long: Crh-like protein CRH12 (504 aa).

The signal sequence occupies residues 1–18 (MYKQILTFLILFLRYILS). The GH16 domain occupies 19–270 (EFPDDPYEDD…YSKALTYSYG (252 aa)). N-linked (GlcNAc...) asparagine glycosylation occurs at Asn-34. Residues Cys-43 and Cys-51 are joined by a disulfide bond. The active-site Nucleophile is the Glu-138. Residue Glu-143 is the Proton donor of the active site. Glu-143 provides a ligand contact to chitin. Asn-161 is a glycosylation site (N-linked (GlcNAc...) asparagine). Residues Lys-221, Trp-225, and Thr-234 each contribute to the chitin site. The interval 304–404 (KPTPKQETDD…LDISTQLPPL (101 aa)) is disordered. Polar residues predominate over residues 316-329 (VLTSSKSQRVATTI). Positions 356–378 (WETEQDETGTDDTENSDNEEEES) are enriched in acidic residues. Residues Asn-407, Asn-416, and Asn-425 are each glycosylated (N-linked (GlcNAc...) asparagine). Gly-479 carries GPI-anchor amidated glycine lipidation. Positions 480–504 (VSSILATSFSSVVIAEILVIVVLLL) are cleaved as a propeptide — removed in mature form.

The protein belongs to the glycosyl hydrolase 16 family. CRH1 subfamily. The GPI-anchor is attached to the protein in the endoplasmic reticulum and serves to target the protein to the cell surface. There, the glucosamine-inositol phospholipid moiety is cleaved off and the GPI-modified mannoprotein is covalently attached via its lipidless GPI glycan remnant to the 1,6-beta-glucan of the outer cell wall layer.

Its subcellular location is the secreted. The protein localises to the cell wall. It localises to the membrane. It catalyses the reaction Random endo-hydrolysis of N-acetyl-beta-D-glucosaminide (1-&gt;4)-beta-linkages in chitin and chitodextrins.. In terms of biological role, dual chitinase/transglycosylase that plays a role in cell wall architecture. Chitinase and transglycosylase activities are coupled. Required for the polysaccharide cross-linking at the septa and the cell wall. More specifically, transfers chitin to 1,6-beta-glucan in the cell wall. Plays an important role in fungal pathogenesis via its functions in cell wall assembly and regeneration, filamentation, and adherence to host cells. The sequence is that of Crh-like protein CRH12 (CRH12) from Candida albicans (strain SC5314 / ATCC MYA-2876) (Yeast).